The primary structure comprises 495 residues: Genome polyprotein (495 aa).

The Extracellular segment spans residues 1–445 (MRCIGISNRD…LNQVFGTIYG (445 aa)). 4 disulfide bridges follow: Cys-3–Cys-30, Cys-60–Cys-121, Cys-74–Cys-105, and Cys-92–Cys-116. Residue Asn-67 is glycosylated (N-linked (GlcNAc...) asparagine; by host). The segment at 98 to 111 (DRGWGNGCGLFGKG) is fusion peptide. The N-linked (GlcNAc...) asparagine; by host glycan is linked to Asn-153. 2 disulfides stabilise this stretch: Cys-185–Cys-285 and Cys-302–Cys-333. Residues 446–466 (AAFSGVSWTMKILIGVIITCI) traverse the membrane as a helical segment. The Cytoplasmic portion of the chain corresponds to 467 to 472 (GMNSRS). A helical transmembrane segment spans residues 473–493 (TSLSVSLVLVGVVTLYLGGMV). The Extracellular segment spans residues 494 to 495 (HA).

Homodimer; in the endoplasmic reticulum and Golgi. Interacts with protein prM. Interacts with non-structural protein 1. Post-translationally, N-glycosylated. In terms of processing, specific enzymatic cleavages in vivo yield mature proteins. Cleavages in the lumen of endoplasmic reticulum are performed by host signal peptidase, wereas cleavages in the cytoplasmic side are performed by serine protease NS3. Signal cleavage at the 2K-4B site requires a prior NS3 protease-mediated cleavage at the 4A-2K site.

The protein localises to the virion membrane. Its subcellular location is the host endoplasmic reticulum membrane. Binds to host cell surface receptor and mediates fusion between viral and cellular membranes. Envelope protein is synthesized in the endoplasmic reticulum in the form of heterodimer with protein prM. They play a role in virion budding in the ER, and the newly formed immature particle is covered with 60 spikes composed of heterodimer between precursor prM and envelope protein E. The virion is transported to the Golgi apparatus where the low pH causes dissociation of PrM-E heterodimers and formation of E homodimers. prM-E cleavage is inefficient, and many virions are only partially matured. These uncleaved prM would play a role in immune evasion. This chain is Genome polyprotein, found in Aedes aegypti (Yellowfever mosquito).